Here is a 162-residue protein sequence, read N- to C-terminus: Putative ureidoglycolate lyase (162 aa).

This sequence belongs to the ureidoglycolate lyase family. Homodimer. Ni(2+) is required as a cofactor.

It catalyses the reaction (S)-ureidoglycolate = urea + glyoxylate. It participates in nitrogen metabolism; (S)-allantoin degradation. Catalyzes the catabolism of the allantoin degradation intermediate (S)-ureidoglycolate, generating urea and glyoxylate. Involved in the utilization of allantoin as nitrogen source. This is Putative ureidoglycolate lyase from Agrobacterium fabrum (strain C58 / ATCC 33970) (Agrobacterium tumefaciens (strain C58)).